Here is a 1542-residue protein sequence, read N- to C-terminus: ABC multidrug transporter AFR1 (1542 aa).

Disordered regions lie at residues 1–84 and 118–141; these read MSAA…LPAD and SQQS…FSRK. Residues 18–41 show a composition bias toward polar residues; that stretch reads TATTQNPSGLANSQVTSDPVPSAT. A compositionally biased stretch (basic and acidic residues) spans 60–69; that stretch reads DKSVDAEKVE. Residues Asn-207 and Asn-397 are each glycosylated (N-linked (GlcNAc...) asparagine). The region spanning 221–473 is the ABC transporter 1 domain; that stretch reads LKVLGIFGVN…MIGLGYRDLP (253 aa). The next 5 membrane-spanning stretches (helical) occupy residues 584-604, 618-638, 669-689, 694-714, and 726-746; these read FGIS…GSVY, GGLL…ELPS, VPYN…MGGL, GAFF…SAFF, and VAAR…GYMI. Asn-822 is a glycosylation site (N-linked (GlcNAc...) asparagine). A helical membrane pass occupies residues 844 to 864; that stretch reads FGILVGFFAFFMFLQMMFIEY. An ABC transporter 2 domain is found at 917–1159; sequence FTWEGLNYTV…VLIDYLERNG (243 aa). N-linked (GlcNAc...) asparagine glycosylation is present at Asn-923. 953–960 is a binding site for ATP; sequence GASGAGKT. 6 helical membrane-spanning segments follow: residues 1253–1273, 1284–1304, 1335–1355, 1365–1385, 1390–1410, and 1516–1536; these read WTRL…FLQL, VFAI…IEPQ, MPYS…GVGF, FFLM…AVAA, ILIA…FCGV, and FGIF…AARF.

Belongs to the ABC transporter superfamily. ABCG family. PDR (TC 3.A.1.205) subfamily.

Its subcellular location is the cell membrane. It catalyses the reaction itraconazole(in) + ATP + H2O = itraconazole(out) + ADP + phosphate + H(+). The enzyme catalyses voriconazole(in) + ATP + H2O = voriconazole(out) + ADP + phosphate + H(+). It carries out the reaction fluconazole(in) + ATP + H2O = fluconazole(out) + ADP + phosphate + H(+). In terms of biological role, major pleiotropic ABC efflux transporter that confers resistance to structurally and functionally unrelated compounds including azoles such as fluconazole (FLC), itraconazole (ITC), posaconazole (POS), and voriconazole (VRC). Is also able to efflux the eukaryote protein synthesis inhibitor cycloheximide (CHX). This Cryptococcus deuterogattii (strain R265) (Cryptococcus gattii VGII (strain R265)) protein is ABC multidrug transporter AFR1.